Reading from the N-terminus, the 532-residue chain is 3-hydroxy-3-methylglutaryl-coenzyme A reductase 1 (532 aa).

Residues 63 to 83 (FATVVYLVSLFAHPDAPATTT) form a helical membrane-spanning segment. Positions 77–117 (DAPATTTGDDDDGQGGSRRARPAAAEPAPMHGHGGGMMEAD) are linker. The interval 78 to 111 (APATTTGDDDDGQGGSRRARPAAAEPAPMHGHGG) is disordered. The segment covering 98–107 (PAAAEPAPMH) has biased composition (low complexity). Residues 118 to 532 (DEEIVAAVAS…SSKDVAKAAS (415 aa)) form a catalytic region. Glu211 functions as the Charge relay system in the catalytic mechanism. N-linked (GlcNAc...) asparagine glycosylation is present at Asn275. Residues Lys343 and Asp419 each act as charge relay system in the active site. The active-site Proton donor is His517. N-linked (GlcNAc...) asparagine glycosylation is present at Asn521.

The protein belongs to the HMG-CoA reductase family.

The protein resides in the endoplasmic reticulum membrane. The enzyme catalyses (R)-mevalonate + 2 NADP(+) + CoA = (3S)-3-hydroxy-3-methylglutaryl-CoA + 2 NADPH + 2 H(+). The protein operates within metabolic intermediate biosynthesis; (R)-mevalonate biosynthesis; (R)-mevalonate from acetyl-CoA: step 3/3. Functionally, catalyzes the synthesis of mevalonate. The specific precursor of all isoprenoid compounds present in plants. The polypeptide is 3-hydroxy-3-methylglutaryl-coenzyme A reductase 1 (HMG1) (Oryza sativa subsp. japonica (Rice)).